The primary structure comprises 332 residues: RING finger protein 225 (332 aa).

Positions 1–55 (MPCPRLPWLRRHRTSQGSGPSSPSTVSAPNSPSRGEDEDAEEEEGDGTPGSGPIL) are disordered. Residues 15–27 (SQGSGPSSPSTVS) show a composition bias toward low complexity. A compositionally biased stretch (acidic residues) spans 36 to 46 (EDEDAEEEEGD). The segment at 63-111 (CLICVSPFDGIFKLPKRLDCGHVFCLECLARLSLATAGGGDAVACPMCR) adopts an RING-type zinc-finger fold. A disordered region spans residues 121–187 (GLPALPTQPG…PPPLRLGRPL (67 aa)). A helical membrane pass occupies residues 205–225 (ALAVLVAAGLVVSGVYIFFLI). Residues 259-332 (THAWTRRPTK…ADGKKVQLQQ (74 aa)) are disordered. Composition is skewed to basic and acidic residues over residues 280–295 (ATKD…KDPV) and 323–332 (ADGKKVQLQQ).

Its subcellular location is the membrane. The sequence is that of RING finger protein 225 from Mus musculus (Mouse).